The sequence spans 250 residues: ATP synthase subunit a (250 aa).

A run of 6 helical transmembrane segments spans residues 27–47, 85–105, 115–135, 141–161, 181–201, and 223–243; these read FTNAALFMFGIVAIIFFFLTF, FFPLVFSLFTFVLVSNVVGLI, LIVTAAMALLVIGTVIVYGFV, FLHLFVPSGVPAFLLPFLVVI, MLAGHIALKVFAFFVVGLASA, and ELLVAMLQAYVFAVLTSIYLN.

The protein belongs to the ATPase A chain family. In terms of assembly, F-type ATPases have 2 components, CF(1) - the catalytic core - and CF(0) - the membrane proton channel. CF(1) has five subunits: alpha(3), beta(3), gamma(1), delta(1), epsilon(1). CF(0) has three main subunits: a(1), b(2) and c(9-12). The alpha and beta chains form an alternating ring which encloses part of the gamma chain. CF(1) is attached to CF(0) by a central stalk formed by the gamma and epsilon chains, while a peripheral stalk is formed by the delta and b chains.

The protein resides in the cell inner membrane. In terms of biological role, key component of the proton channel; it plays a direct role in the translocation of protons across the membrane. The polypeptide is ATP synthase subunit a (Xanthobacter autotrophicus (strain ATCC BAA-1158 / Py2)).